Here is a 312-residue protein sequence, read N- to C-terminus: MSPSKKILVLLLFPILLVSSHPIPAEDPAKQCNLSEDDLTKLKAAISSASSAKAANEDILPSTTLAACPMLKNFTEMLKTVATDMEVLKTQGVSNMEVQLLRESFEEKLNDLAKNKDIFERQANQDTSKAEGEMVEKINKLQLEMAKLQEEIEEQTKQMYVDMIEYIFERLKMNDTEAIDSYAQIVMKTKMHELIMKLKTDRLVLWEMVKYVEGKKNKWVGRKVLNTILDQVNKLKLYKPEEVEIGKNSLVVVWCWKFNSETVYGTTDEDQKSFHLAKLFFPKEKGCKECADVKSRTMCNNDYPKVMVKAFG.

The signal sequence occupies residues 1-20; that stretch reads MSPSKKILVLLLFPILLVSS. Positions 95 to 158 form a coiled coil; the sequence is NMEVQLLRES…QEEIEEQTKQ (64 aa).

The protein belongs to the salivary protein SG34 family. Female salivary gland (at protein level). Low-level expression in ovary.

Possible serine protease. In terms of biological role, (Microbial infection) Modulates replication of duck Tembusu virus in salivary glands and virus release into the saliva, probably via the regulation of antimicrobial peptides expression in response to virus infection. Functionally, (Microbial infection) Enhances replication of dengue virus type 2 in human keratinocytes, probably by suppressing the production of type I interferons and antimicrobial peptides in response to virus infection. The protein is Salivary protein SG34 of Aedes aegypti (Yellowfever mosquito).